Here is an 841-residue protein sequence, read N- to C-terminus: MAP7 domain-containing protein 1 (841 aa).

2 disordered regions span residues Met1–Lys151 and Glu184–Lys208. Over residues Pro22–Pro52 the composition is skewed to pro residues. Phosphothreonine occurs at positions 47 and 51. 3 positions are modified to phosphoserine: Ser70, Ser86, and Ser93. Thr97 is subject to Phosphothreonine. A phosphoserine mark is found at Ser113 and Ser116. At Thr118 the chain carries Phosphothreonine. Ser123 and Ser125 each carry phosphoserine. Residues Thr128 to Thr222 adopt a coiled-coil conformation. Residues Gln130 to Lys151 are compositionally biased toward basic and acidic residues. Phosphoserine is present on residues Ser254, Ser273, Ser313, Ser366, and Ser399. The disordered stretch occupies residues Thr316–Thr813. The segment covering Ala365 to Arg377 has biased composition (polar residues). Basic and acidic residues predominate over residues Arg405 to Arg435. Positions Val412–Gln441 form a coiled coil. 5 positions are modified to phosphoserine: Ser442, Ser446, Ser452, Ser454, and Ser460. Positions Ser460–Ser473 are enriched in low complexity. Residue Lys462 forms a Glycyl lysine isopeptide (Lys-Gly) (interchain with G-Cter in SUMO2) linkage. Residues Ser479 and Ser496 each carry the phosphoserine modification. Residues Ser479 to Pro497 show a composition bias toward pro residues. Positions Pro523–Ser539 are enriched in basic and acidic residues. Residues Ser544, Ser548, and Ser552 each carry the phosphoserine modification. Residues Ser544 to Glu561 are compositionally biased toward pro residues. Phosphothreonine is present on Thr554. Low complexity predominate over residues Gln562–Ser576. Pro residues predominate over residues Pro577–Pro586. The stretch at Thr593 to Lys721 forms a coiled coil. Residues Thr594–Glu735 show a composition bias toward basic and acidic residues. Ser742 and Ser753 each carry phosphoserine. Phosphothreonine is present on residues Thr813 and Thr816. A Phosphoserine modification is found at Ser834.

It belongs to the MAP7 family.

The protein localises to the cytoplasm. Its subcellular location is the cytoskeleton. The protein resides in the spindle. It localises to the microtubule organizing center. It is found in the centrosome. The protein localises to the midbody. Functionally, microtubule-stabilizing protein involved in the control of cell motility and neurite outgrowth. Facilitate microtubule stabilization through the maintenance of acetylated stable microtubules. This chain is MAP7 domain-containing protein 1 (MAP7D1), found in Homo sapiens (Human).